Consider the following 252-residue polypeptide: Eukaryotic translation initiation factor 3 subunit K (252 aa).

In terms of domain architecture, PCI spans 46-225 (FDCYANLALL…VKVPTNKENE (180 aa)).

The protein belongs to the eIF-3 subunit K family. In terms of assembly, component of the eukaryotic translation initiation factor 3 (eIF-3) complex.

The protein resides in the cytoplasm. Functionally, component of the eukaryotic translation initiation factor 3 (eIF-3) complex, which is involved in protein synthesis of a specialized repertoire of mRNAs and, together with other initiation factors, stimulates binding of mRNA and methionyl-tRNAi to the 40S ribosome. The eIF-3 complex specifically targets and initiates translation of a subset of mRNAs involved in cell proliferation. This chain is Eukaryotic translation initiation factor 3 subunit K, found in Aspergillus terreus (strain NIH 2624 / FGSC A1156).